The primary structure comprises 20 residues: Collagenolytic protease 36 kDa C (20 aa).

The Peptidase S1 domain maps to 1 to 20; sequence IVGGSEATSGQFPYQXSFQD. The segment at 1 to 20 is disordered; the sequence is IVGGSEATSGQFPYQXSFQD.

Belongs to the peptidase S1 family.

The catalysed reaction is Hydrolysis of proteins, with broad specificity for peptide bonds. Native collagen is cleaved about 75% of the length of the molecule from the N-terminus. Low activity on small molecule substrates of both trypsin and chymotrypsin.. In terms of biological role, this enzyme is a serine protease capable of degrading the native triple helix of collagen. The sequence is that of Collagenolytic protease 36 kDa C from Paralithodes camtschaticus (Red king crab).